A 130-amino-acid chain; its full sequence is Small ribosomal subunit protein uS9 (130 aa).

It belongs to the universal ribosomal protein uS9 family.

This Aliivibrio salmonicida (strain LFI1238) (Vibrio salmonicida (strain LFI1238)) protein is Small ribosomal subunit protein uS9.